A 182-amino-acid chain; its full sequence is Gamma-crystallin N (182 aa).

Beta/gamma crystallin 'Greek key' domains follow at residues 6-46 (GKIT…HVES), 47-89 (GAWV…RPVG), and 95-136 (FRLE…KVYG). A disordered region spans residues 153-182 (LSSSLQSDQGPEEATTKPATTQPPFLTANL). The span at 169-182 (KPATTQPPFLTANL) shows a compositional bias: polar residues.

This sequence belongs to the beta/gamma-crystallin family. In terms of assembly, monomer. Not specifically expressed in eye.

In Homo sapiens (Human), this protein is Gamma-crystallin N.